The sequence spans 3414 residues: Hemocyanin 1 (3414 aa).

The signal sequence occupies residues 1-16; the sequence is MLSVRLLIVVLALANA. Glu17 contacts a divalent metal cation. Residues 17-437 are functional unit a (wall); sequence ENLVRKSVEH…PPVKHHQSAN (421 aa). A Cu cation-binding site is contributed by His58. Cys64 and Cys73 are oxidised to a cystine. Residues 74–76 constitute a cross-link (2'-(S-cysteinyl)-histidine (Cys-His)); that stretch reads CIH. 5 residues coordinate Cu cation: His76, His85, His195, His199, and His226. Cys185 and Cys252 form a disulfide bridge. The 2'-(S-cysteinyl)-histidine (Cys-His) cross-link spans 287 to 290; that stretch reads CELH. A disulfide bridge connects residues Cys339 and Cys351. An N-linked (GlcNAc...) asparagine glycan is attached at Asn403. The tract at residues 438 to 851 is functional unit b (wall); it reads LLVRKNINDL…RVKFDKVPRS (414 aa). His478 is a Cu cation binding site. A disulfide bond links Cys484 and Cys495. A cross-link (2'-(S-cysteinyl)-histidine (Cys-His)) is located at residues 496–498; it reads CVH. Cu cation is bound by residues His498 and His507. A glycan (N-linked (GlcNAc...) asparagine) is linked at Asn545. Cys608 and Cys674 form a disulfide bridge. Residues His618, His622, and His649 each coordinate Cu cation. The stretch at 628-669 is one WD 1 repeat; sequence SEHFSMSSLHYTAFDPLFYFHHSNVDRLWAVWQALQMRRHKP. Glu737 is a binding site for a divalent metal cation. The functional unit c (wall) stretch occupies residues 852-1271; the sequence is RLIRKNVDRL…EVYQAEVTSA (420 aa). His892 contacts Cu cation. A disulfide bond links Cys898 and Cys909. Residues 910–912 constitute a cross-link (2'-(S-cysteinyl)-histidine (Cys-His)); the sequence is CVH. Positions 912, 921, 1031, 1035, and 1062 each coordinate Cu cation. 2 cysteine pairs are disulfide-bonded: Cys1021-Cys1088 and Cys1178-Cys1184. Residues 1041-1082 form a WD 2 repeat; sequence AQPYGMASLRYTAFDPLFYLHHSNTDRIWAIWQALQKYRGKP. Positions 1272–1680 are functional unit d (wall); the sequence is NRIRKNIENL…AHTDDGHTEP (409 aa). His1309 lines the Cu cation pocket. The cysteines at positions 1315 and 1324 are disulfide-linked. Residues 1325–1327 constitute a cross-link (2'-(S-cysteinyl)-histidine (Cys-His)); the sequence is CVH. The Cu cation site is built by His1327, His1336, His1440, His1444, and His1471. Intrachain disulfides connect Cys1430–Cys1497 and Cys1585–Cys1595. Residues 1450–1491 form a WD 3 repeat; that stretch reads KGKYSMSNLDYAAFDPVFFLHHATTDRIWAIWQDLQRFRKRP. N-linked (GlcNAc...) asparagine glycosylation is present at Asn1648. Residues 1681–2097 form a functional unit e (wall) region; it reads VMIRKDITQL…HDISSHHLSL (417 aa). Position 1721 (His1721) interacts with Cu cation. Cys1727 and Cys1738 are oxidised to a cystine. Positions 1739 to 1741 form a cross-link, 2'-(S-cysteinyl)-histidine (Cys-His); the sequence is CVH. Residues His1741, His1750, His1863, His1867, and His1894 each contribute to the Cu cation site. Intrachain disulfides connect Cys1853/Cys1920 and Cys2009/Cys2015. The stretch at 1873 to 1914 is one WD 4 repeat; the sequence is KEPYGIGHLHYASYDPLFYIHHSQTDRIWAIWQSLQRFRGLS. The functional unit f (wall) stretch occupies residues 2098–2517; that stretch reads NKVRHDLSTL…EDHHSSSMAG (420 aa). A Cu cation-binding site is contributed by His2138. Cysteines 2144 and 2154 form a disulfide. Asn2145 is a glycosylation site (N-linked (GlcNAc...) asparagine). The 2'-(S-cysteinyl)-histidine (Cys-His) cross-link spans 2155–2157; the sequence is CIH. Cu cation contacts are provided by His2157, His2166, His2276, His2280, and His2307. The stretch at 2163–2199 is one WD 5 repeat; that stretch reads PHWHRLYTLQFEQALRRHGSSVAVPYWDWTKPIHNIP. 2 disulfide bridges follow: Cys2266–Cys2333 and Cys2420–Cys2426. Residue Glu2424 participates in a divalent metal cation binding. Residues 2518 to 2921 are functional unit g (internal arc); the sequence is HGVRKEINTL…EKHHEDHHED (404 aa). His2558 is a Cu cation binding site. Cys2564 and Cys2574 are joined by a disulfide. The N-linked (GlcNAc...) asparagine glycan is linked to Asn2571. Positions 2575–2577 form a cross-link, 2'-(S-cysteinyl)-histidine (Cys-His); sequence CTH. 5 residues coordinate Cu cation: His2577, His2586, His2686, His2690, and His2717. 2 disulfides stabilise this stretch: Cys2676-Cys2743 and Cys2830-Cys2836. The WD 6 repeat unit spans residues 2696 to 2737; sequence LTPYGMSTLEYTTYDPLFWLHHANTDRIWAIWQALQEYRGLP. Residues 2922–3414 form a functional unit h (internal slab) region; the sequence is ILVRKNIHSL…LRIHVHVDDE (493 aa). His2962 lines the Cu cation pocket. An intrachain disulfide couples Cys2968 to Cys2978. A cross-link (2'-(S-cysteinyl)-histidine (Cys-His)) is located at residues 2979–2981; the sequence is CVH. 5 residues coordinate Cu cation: His2981, His2990, His3091, His3095, and His3122. A disulfide bridge links Cys3081 with Cys3148. The stretch at 3101-3142 is one WD 7 repeat; it reads AEKYSMSTLEYSAFDPYFMIHHASLDKIWIIWQELQKRRVKP. An N-linked (GlcNAc...) asparagine glycan is attached at Asn3278. Cys3367 and Cys3400 form a disulfide bridge.

Belongs to the tyrosinase family. Hemocyanin subfamily. In terms of assembly, homo-didecamer, with two decamers assembled face-to-face at their open ends. This didecamer form a stable 25 nM cylinder wall. Probably N-glycosylated. Asn-1280 and Asn-2484 are buried deeply in the protein which make them inaccessible for sugar attachment. Asn-3278 N-glycan is likely to represent a diantennate carbohydrate tree. The didecamer is almost evenly tagged by a total of 120 sugar trees. As to expression, hemolymph.

Its subcellular location is the secreted. The protein resides in the extracellular space. Functionally, hemocyanins are copper-containing oxygen carriers occurring freely dissolved in the hemolymph of many mollusks and arthropods. The sequence is that of Hemocyanin 1 from Megathura crenulata (Giant keyhole limpet).